An 863-amino-acid chain; its full sequence is Autotaxin (863 aa).

An N-terminal signal peptide occupies residues 1-27 (MARRSSFQSCQIISLFTFAVGVNICLG). Positions 28 to 35 (FTAHRIKR) are cleaved as a propeptide — removed by furin. N-linked (GlcNAc...) asparagine glycosylation occurs at Asn54. 2 consecutive SMB domains span residues 55–98 (ISGS…LKTA) and 99–143 (RGWE…GESH). Disulfide bonds link Cys59/Cys76, Cys63/Cys94, Cys74/Cys87, Cys80/Cys86, Cys103/Cys120, Cys108/Cys138, Cys118/Cys131, Cys124/Cys130, Cys149/Cys195, and Cys157/Cys351. The Cell attachment site motif lies at 127–129 (RGD). The segment at 145-502 (VDDDCEEIKA…STFKYKTKVP (358 aa)) is phosphodiesterase. Zn(2+) is bound by residues Asp172 and Thr210. Residue Thr210 is the Nucleophile of the active site. Residues Thr210, Asn231, and Asp312 each contribute to the 1-(9Z-octadecenoyl)-sn-glycero-3-phosphate site. 1-hexadecanoyl-sn-glycero-3-phosphate is bound by residues Thr210, Asn231, and Asp312. 1-tetradecanoyl-sn-glycerol 3-phosphate contacts are provided by Thr210, Asn231, and Asp312. 4 residues coordinate Zn(2+): Asp312, His316, Asp359, and His360. Intrachain disulfides connect Cys367–Cys469, Cys414–Cys806, Cys567–Cys667, Cys569–Cys652, and Cys775–Cys785. An N-linked (GlcNAc...) asparagine glycan is attached at Asn411. His475 lines the Zn(2+) pocket. His475 contributes to the 1-(9Z-octadecenoyl)-sn-glycero-3-phosphate binding site. Residue His475 coordinates 1-hexadecanoyl-sn-glycero-3-phosphate. His475 serves as a coordination point for 1-tetradecanoyl-sn-glycerol 3-phosphate. N-linked (GlcNAc...) asparagine glycosylation is present at Asn525. Residues 598–863 (LYGRPAVLYR…TYLHTYESEI (266 aa)) are nuclease-like domain. Asp740, Asp742, Asp744, Leu746, and Asp748 together coordinate Ca(2+). Residue Asn807 is glycosylated (N-linked (GlcNAc...) asparagine). The required for secretion stretch occupies residues 830 to 851 (IEHLTSLDFFRKTSRSYPEILT).

This sequence belongs to the nucleotide pyrophosphatase/phosphodiesterase family. The cofactor is Zn(2+). Ca(2+) is required as a cofactor. N-glycosylation, but not furin-cleavage, plays a critical role on secretion and on lysoPLD activity. Post-translationally, the interdomain disulfide bond between Cys-414 and Cys-806 is essential for catalytic activity. In terms of tissue distribution, detected in blood plasma (at protein level). Predominantly expressed in brain, placenta, ovary, and small intestine. Expressed in a number of carcinomas such as hepatocellular and prostate carcinoma, neuroblastoma and non-small-cell lung cancer. Expressed in body fluids such as plasma, cerebral spinal fluid (CSF), saliva, follicular and amniotic fluids. Not detected in leukocytes. Isoform 1 is more highly expressed in peripheral tissues than in the central nervous system (CNS). Adipocytes only express isoform 1. Isoform 3 is more highly expressed in the brain than in peripheral tissues.

It localises to the secreted. It carries out the reaction a 1-O-alkyl-sn-glycero-3-phosphoethanolamine + H2O = a 1-O-alkyl-sn-glycero-3-phosphate + ethanolamine + H(+). The enzyme catalyses a 1-acyl-sn-glycero-3-phosphoethanolamine + H2O = a 1-acyl-sn-glycero-3-phosphate + ethanolamine + H(+). The catalysed reaction is 1-(9Z-octadecenoyl)-sn-glycero-3-phosphoethanolamine + H2O = 1-(9Z-octadecenoyl)-sn-glycero-3-phosphate + ethanolamine + H(+). It catalyses the reaction a 1-O-alkyl-sn-glycero-3-phosphocholine + H2O = a 1-O-alkyl-sn-glycero-3-phosphate + choline + H(+). It carries out the reaction 1-O-(9Z-octadecenyl)-sn-glycero-3-phosphocholine + H2O = 1-O-(9Z-octadecenyl)-sn-glycero-3-phosphate + choline + H(+). The enzyme catalyses 1-O-hexadecyl-sn-glycero-3-phosphocholine + H2O = 1-O-hexadecyl-sn-glycero-3-phosphate + choline + H(+). The catalysed reaction is a 1-O-(1Z-alkenyl)-sn-glycero-3-phosphocholine + H2O = a 1-O-(1Z-alkenyl)-sn-glycero-3-phosphate + choline + H(+). It catalyses the reaction a 1-acyl-sn-glycero-3-phosphocholine + H2O = a 1-acyl-sn-glycero-3-phosphate + choline + H(+). It carries out the reaction 1-dodecanoyl-sn-glycero-3-phosphocholine + H2O = 1-dodecanoyl-sn-glycerol 3-phosphate + choline + H(+). The enzyme catalyses 1-(9Z-octadecenoyl)-sn-glycero-3-phosphocholine + H2O = 1-(9Z-octadecenoyl)-sn-glycero-3-phosphate + choline + H(+). The catalysed reaction is 1-tetradecanoyl-sn-glycero-3-phosphocholine + H2O = 1-tetradecanoyl-sn-glycerol 3-phosphate + choline + H(+). It catalyses the reaction 1-decanoyl-sn-glycero-3-phosphocholine + H2O = 1-decanoyl-sn-glycero-3-phosphate + choline + H(+). It carries out the reaction 1-octadecanoyl-sn-glycero-3-phosphocholine + H2O = 1-octadecanoyl-sn-glycero-3-phosphate + choline + H(+). The enzyme catalyses 1-hexadecanoyl-sn-glycero-3-phosphocholine + H2O = 1-hexadecanoyl-sn-glycero-3-phosphate + choline + H(+). The catalysed reaction is 1-hexanoyl-sn-glycero-3-phosphocholine + H2O = 1-hexanoyl-sn-glycero-3-phosphate + choline + H(+). It catalyses the reaction 1-(9Z,12Z)-octadecadienoyl-sn-glycero-3-phosphocholine + H2O = 1-(9Z,12Z)-octadecadienoyl-sn-glycero-3-phosphate + choline + H(+). It carries out the reaction sphing-4-enine-phosphocholine + H2O = sphing-4-enine 1-phosphate + choline + H(+). The enzyme catalyses 1-(5Z,8Z,11Z,14Z-eicosatetraenoyl)-sn-glycero-3-phosphocholine + H2O = 1-(5Z,8Z,11Z,14Z-eicosatetraenoyl)-sn-glycero-3-phosphate + choline + H(+). The catalysed reaction is a 2-acyl-sn-glycero-3-phosphocholine + H2O = a 2-acyl-sn-glycerol 3-phosphate + choline + H(+). It catalyses the reaction a 1,2-diacyl-sn-glycero-3-phosphocholine + H2O = a 1,2-diacyl-sn-glycero-3-phosphate + choline + H(+). It carries out the reaction 1,2-dioctanoyl-sn-glycero-3-phosphocholine + H2O = 1,2-dioctanoyl-sn-glycero-3-phosphate + choline + H(+). The enzyme catalyses 1,2-didecanoyl-sn-glycero-3-phosphocholine + H2O = 1,2-didecanoyl-sn-glycero-3-phosphate + choline + H(+). The catalysed reaction is a 1-acyl-sn-glycero-3-phospho-L-serine + H2O = a 1-acyl-sn-glycero-3-phosphate + L-serine + H(+). It catalyses the reaction 1-(9Z-octadecenoyl)-sn-glycero-3-phospho-L-serine + H2O = 1-(9Z-octadecenoyl)-sn-glycero-3-phosphate + L-serine + H(+). It carries out the reaction a 2-acyl-sn-glycero-3-phospho-L-serine + H2O = a 2-acyl-sn-glycerol 3-phosphate + L-serine + H(+). Its activity is regulated as follows. Inhibited by lysophosphatidic acid (LPA) and sphingosine-1-phosphate (S1P). Inhibited by EDTA and EGTA. Functionally, secreted lysophospholipase D that hydrolyzes lysophospholipids to produce the signaling molecule lysophosphatidic acid (LPA) in extracellular fluids. Its major substrate is lysophosphatidylcholine. Can also act on sphingosylphosphorylcholine producing sphingosine-1-phosphate, a modulator of cell motility. Can hydrolyze, in vitro, bis-pNPP, to some extent pNP-TMP, and barely ATP. Involved in several motility-related processes such as angiogenesis and neurite outgrowth. Acts as an angiogenic factor by stimulating migration of smooth muscle cells and microtubule formation. Stimulates migration of melanoma cells, probably via a pertussis toxin-sensitive G protein. May have a role in induction of parturition. Possible involvement in cell proliferation and adipose tissue development. Required for LPA production in activated platelets, cleaves the sn-1 lysophospholipids to generate sn-1 lysophosphatidic acids containing predominantly 18:2 and 20:4 fatty acids. Shows a preference for the sn-1 to the sn-2 isomer of 1-O-alkyl-sn-glycero-3-phosphocholine (lyso-PAF). The chain is Autotaxin from Homo sapiens (Human).